The primary structure comprises 434 residues: D-amino acid dehydrogenase (434 aa).

Residue 3–17 participates in FAD binding; it reads VIVLGSGVIGTTTAY.

It belongs to the DadA oxidoreductase family. FAD serves as cofactor.

It catalyses the reaction a D-alpha-amino acid + A + H2O = a 2-oxocarboxylate + AH2 + NH4(+). The protein operates within amino-acid degradation; D-alanine degradation; NH(3) and pyruvate from D-alanine: step 1/1. Functionally, oxidative deamination of D-amino acids. The sequence is that of D-amino acid dehydrogenase from Bordetella petrii (strain ATCC BAA-461 / DSM 12804 / CCUG 43448).